The chain runs to 349 residues: Probable formaldehyde dehydrogenase AdhA (349 aa).

Positions 44, 66, 97, 100, 103, 111, and 161 each coordinate Zn(2+).

Belongs to the zinc-containing alcohol dehydrogenase family. Zn(2+) serves as cofactor.

In terms of biological role, functions in the protection against aldehyde-stress. In Bacillus subtilis (strain 168), this protein is Probable formaldehyde dehydrogenase AdhA (adhA).